Reading from the N-terminus, the 632-residue chain is 2-hydroxyacyl-CoA lyase 2 (632 aa).

A helical transmembrane segment spans residues 10–30 (AWGFFSSFLLLAFGTLVAALL). Glutamate 98 contributes to the thiamine diphosphate binding site. A thiamine pyrophosphate binding region spans residues 470–550 (DFVGTAAYLV…VMALIGNDAG (81 aa)). Mg(2+) contacts are provided by aspartate 521 and asparagine 547.

Belongs to the TPP enzyme family. Mg(2+) serves as cofactor. Requires thiamine diphosphate as cofactor.

The protein localises to the endoplasmic reticulum membrane. The enzyme catalyses 2-hydroxyoctadecanoyl-CoA = heptadecanal + formyl-CoA. The catalysed reaction is (2R)-hydroxyhexadecanoyl-CoA = pentadecanal + formyl-CoA. Functionally, endoplasmic reticulum 2-OH acyl-CoA lyase involved in the cleavage (C1 removal) reaction in the fatty acid alpha-oxydation in a thiamine pyrophosphate (TPP)-dependent manner. Involved in the phytosphingosine degradation pathway. This is 2-hydroxyacyl-CoA lyase 2 (ILVBL) from Bos taurus (Bovine).